The following is a 410-amino-acid chain: F-box protein At3g19890 (410 aa).

In terms of domain architecture, F-box spans 2-49 (TMISDLSKDLVEEILSKAPITSLGAVRSTHKQWNALSKGRLLYKAEAK). The disordered stretch occupies residues 386–410 (EDKCKSIKMVDTKRQRKKRKRKSKR). Positions 387–398 (DKCKSIKMVDTK) are enriched in basic and acidic residues. Positions 399–410 (RQRKKRKRKSKR) are enriched in basic residues.

This chain is F-box protein At3g19890, found in Arabidopsis thaliana (Mouse-ear cress).